The primary structure comprises 130 residues: Small ribosomal subunit protein uS9 (130 aa).

This sequence belongs to the universal ribosomal protein uS9 family.

In Aliivibrio fischeri (strain MJ11) (Vibrio fischeri), this protein is Small ribosomal subunit protein uS9.